The chain runs to 494 residues: Alpha-amylase (494 aa).

The first 26 residues, 1-26, serve as a signal peptide directing secretion; the sequence is MQISKAALLASLAALVYAQPVTLFKR. Cys57 and Cys65 are disulfide-bonded. Position 110 (Trp110) interacts with substrate. Asn148 contributes to the Ca(2+) binding site. His149 contributes to the substrate binding site. Cys177 and Cys191 are joined by a disulfide. Asp202 is a binding site for Ca(2+). The N-linked (GlcNAc...) asparagine glycan is linked to Asn224. Arg231 is a binding site for substrate. 3 residues coordinate Ca(2+): Asp233, His237, and Glu257. Catalysis depends on Asp233, which acts as the Nucleophile. Position 236–237 (236–237) interacts with substrate; it reads KH. Glu257 functions as the Proton donor in the catalytic mechanism. Gly261 is a binding site for substrate. Cys267 and Cys310 form a disulfide bridge. Positions 324 and 371 each coordinate substrate. A disulfide bridge connects residues Cys462 and Cys493.

It belongs to the glycosyl hydrolase 13 family. Requires Ca(2+) as cofactor.

The protein localises to the secreted. The catalysed reaction is Endohydrolysis of (1-&gt;4)-alpha-D-glucosidic linkages in polysaccharides containing three or more (1-&gt;4)-alpha-linked D-glucose units.. The sequence is that of Alpha-amylase (ALP1) from Saccharomycopsis fibuligera (Yeast).